The chain runs to 1359 residues: MALGDLMASRLVHSSSSSAAPSAALPNHHTNHLVDDHLPVENGPDPRRDVPDEEPPPPPPPQVALLPQVVVLCEQRHEGFDEAAAAAAGPSTSGPVSKWRPKDRMKTGCVALVLCLNISVDPPDVIKISPCARKECWIDPFSMAPPKALETIGKTLHSQYERWQPKARYKLQLDPTLEEVKKLCNTCRKFARTERVLFHYNGHGVPKPTANGEIWVFNKSYTQYIPLPITDLDSWLKTPSIYVFDCSAAGMIVKAFLERLDWSSSSSASSSKDCILLAACEAHQTLPQSAEFPADVFTACLTTPIKMALHWFCNRSLLRDSMEHNLIDQIPGRQNDRKTLLGELNWIFTAITDTIAWNVLPHDLFQRLFRQDLLVASLFRNFLLAERIMRSANCSPISYPLLPPTHQHHMWDAWDMAAEICLSKLPQLIADPNAEFQPSPFFTEQLTAFEVWLDHGSEDKKPPEQLPIVLQVLLSQSHRFRALVLLGRFLDMGPWAVDLALSVGIFPYVLKLLQTSAMELRQILVFIWTKILSLDKSCQVDLVKDGGHAYFIRFLDSLDAYPEQRAMAAFVLAVIVDGHRIGQEACANAGLIDVCLRHLQPENPNDAQTEPLLLQWLCLCLGKLWEDFPEAQLLGLQSNAPEIVICLLSEPQPEVRASAVFALGNLVDIGSPSLNGADDDSDDDEKVRAEINVVRSLLQISSDGSPLVRSEVAVALTRFAMGHNKHIKSVAAEYWKPQTNSLLKSLPSLANINSSNVYSPSSLIQGSSGLASHIGPVLRVGSDNSATARDGRISTSSPIATNSIMHGSPQSDDSSQHSDSGILLRENASNGGLNYSRSRPIDNGIYSQFIATMCNVAKDPYPRIASIGKRALSLIGVEQVSMRNSRLSNGGAHPGETSVPPSSNFGMARSSSWFDMNSGNFSVAFRTPPVSPPQHDYLTGLRRVCSMEFRPHVLNSPDGLADPLLSSSAAPSNMGLYILPQSLIYRWSCGHFSRPLLTGSDDNEEANARREERERIAMDCIAKCQRSSCKMTSQIASWDTRFELGTKASLLLPFSPIVVAADENEQIRVWNYDDALPVNTFENHKLSDRGLSKLLLINELDDSLLLVGSSDGNVRIWRNYTQKGGQKLVTAFSSVQGYRSAGRSIVFDWQQQSGYLYASGDMSSILVWDLDKEQVNTIQSTADSGISALSASQVRCGQFAAGFLDASVRIFDVRTPDRLVYTARPHAPRSEKVVGIGFQPGFDPYKIVSASQAGDIQFLDVRRASEPYLTIEAHRGSLTALAVHRHAPVIASGSAKQMIKVFSLEGEQLTIIRYQPSFMGQRIGSVNCLSFHRYKSLLAAGAGDNALVSIYAEDNYQVR.

2 disordered regions span residues 17–64 (SSAA…PQVA) and 782–819 (SDNSATARDGRISTSSPIATNSIMHGSPQSDDSSQHSD). Basic and acidic residues predominate over residues 32-50 (HLVDDHLPVENGPDPRRDV). Polar residues predominate over residues 782 to 805 (SDNSATARDGRISTSSPIATNSIM). Residues 806 to 819 (HGSPQSDDSSQHSD) show a composition bias toward low complexity. 7 WD repeats span residues 1041-1080 (RFELGTKASLLLPFSPIVVAADENEQIRVWNYDDALPVNT), 1087-1127 (SDRG…GGQK), 1139-1178 (RSAGRSIVFDWQQQSGYLYASGDMSSILVWDLDKEQVNTI), 1181-1221 (TADS…RLVY), 1228-1269 (PRSE…EPYL), 1273-1312 (AHRGSLTALAVHRHAPVIASGSAKQMIKVFSLEGEQLTII), and 1321-1359 (QRIGSVNCLSFHRYKSLLAAGAGDNALVSIYAEDNYQVR).

The protein belongs to the WD repeat RAPTOR family. The target of rapamycin complex 1 (TORC1) is composed of at least RAPTOR, LST8 and TOR.

In terms of biological role, component of TORC1 complex, which is an essential cell growth regulator that controls plant development. Acts by recruiting substrates for TOR. Acts by activating transcription, protein synthesis and ribosome biogenesis, and inhibiting mRNA degradation and autophagy. The polypeptide is Regulatory-associated protein of TOR 2 (RAPTOR2) (Oryza sativa subsp. japonica (Rice)).